The chain runs to 221 residues: Histone H1.3 (221 aa).

Residues methionine 1–lysine 17 show a composition bias toward low complexity. Positions methionine 1–serine 42 are disordered. Serine 2 is modified (N-acetylserine). Phosphoserine is present on serine 2. An N6-acetyllysine modification is found at lysine 17. Position 18 is a phosphothreonine (threonine 18). The span at valine 20 to alanine 36 shows a compositional bias: basic residues. N6-(beta-hydroxybutyryl)lysine occurs at positions 33, 35, and 53. Residues serine 37 to lysine 110 form the H15 domain. Arginine 55 is subject to Citrulline. 3 positions are modified to N6-(beta-hydroxybutyryl)lysine: lysine 65, lysine 86, and lysine 91. Residues glycine 92–lysine 221 form a disordered region. Position 105 is a phosphoserine; by PKC (serine 105). Lysine 107 and lysine 141 each carry N6-(beta-hydroxybutyryl)lysine. Basic residues-rich tracts occupy residues lysine 120–lysine 141, lysine 150–lysine 161, lysine 170–alanine 187, and lysine 194–lysine 221.

Belongs to the histone H1/H5 family. H1 histones are progressively phosphorylated during the cell cycle, becoming maximally phosphorylated during late G2 phase and M phase, and being dephosphorylated sharply thereafter. In terms of processing, hydroxybutyrylation of histones is induced by starvation. Post-translationally, citrullination at Arg-55 (H1R54ci) by PADI4 takes place within the DNA-binding site of H1 and results in its displacement from chromatin and global chromatin decondensation, thereby promoting pluripotency and stem cell maintenance.

It is found in the nucleus. It localises to the chromosome. Functionally, histone H1 protein binds to linker DNA between nucleosomes forming the macromolecular structure known as the chromatin fiber. Histones H1 are necessary for the condensation of nucleosome chains into higher-order structured fibers. Also acts as a regulator of individual gene transcription through chromatin remodeling, nucleosome spacing and DNA methylation. The chain is Histone H1.3 from Mus musculus (Mouse).